We begin with the raw amino-acid sequence, 420 residues long: Cyclin-B2-1 (420 aa).

The interval 1-61 (MDRASENRRL…EKSGKEEQKP (61 aa)) is disordered. The segment covering 49–60 (PMLEKSGKEEQK) has biased composition (basic and acidic residues).

It belongs to the cyclin family. Cyclin AB subfamily. As to quaternary structure, interacts with CDKB2-1. In terms of tissue distribution, expressed in the root apices.

In terms of biological role, involved in the control of the cell cycle at the G2/M (mitosis) transition. May activate CDKB2-1 kinase. This is Cyclin-B2-1 (CYCB2-1) from Oryza sativa subsp. japonica (Rice).